A 59-amino-acid polypeptide reads, in one-letter code: Antitoxin RelB4 (59 aa).

Residues 38–59 (VGEWLKTLGTPHQTPPPYSWRK) are disordered. Positions 50 to 59 (QTPPPYSWRK) are enriched in pro residues.

In terms of biological role, antitoxin component of a type II toxin-antitoxin (TA) system. Neutralizes the effect of cognate toxin RelE4, but no other RelE or ParE toxin. This Caulobacter vibrioides (strain ATCC 19089 / CIP 103742 / CB 15) (Caulobacter crescentus) protein is Antitoxin RelB4 (relB4).